The following is a 222-amino-acid chain: Thymidylate kinase (222 aa).

Residues 29-34 (RVGKST) and arginine 111 each bind ATP. Residues 146–170 (LSMSSEDATKRGEYGGERYEKLEFQ) form an LID region.

The protein belongs to the thymidylate kinase family. Homodimer. It depends on Mg(2+) as a cofactor.

It carries out the reaction dTMP + ATP = dTDP + ADP. The protein operates within pyrimidine metabolism; dTTP biosynthesis. In terms of biological role, catalyzes the phosphorylation of thymidine monophosphate (dTMP) to thymidine diphosphate (dTDP), the immediate precursor for the DNA building block dTTP, with ATP as the preferred phosphoryl donor in the presence of Mg(2+). The chain is Thymidylate kinase (dtymk) from Dictyostelium discoideum (Social amoeba).